The chain runs to 838 residues: Probable inorganic carbon transporter subunit DabA (838 aa).

The Zn(2+) site is built by Cys-353, Asp-355, His-537, and Cys-552.

It belongs to the inorganic carbon transporter (TC 9.A.2) DabA family. Forms a complex with DabB. It depends on Zn(2+) as a cofactor.

It is found in the cell membrane. In terms of biological role, part of an energy-coupled inorganic carbon pump. In Chloroflexus aurantiacus (strain ATCC 29366 / DSM 635 / J-10-fl), this protein is Probable inorganic carbon transporter subunit DabA.